A 547-amino-acid polypeptide reads, in one-letter code: G protein-coupled receptor associated sorting protein 3 (547 aa).

2 stretches are compositionally biased toward basic residues: residues 1 to 10 (MTGTKNKTRA) and 38 to 48 (AKTRAKAKAKT). Positions 1–53 (MTGTKNKTRAQAKTEKKPVTQAKAGAEREATGVVRPVAKTRAKAKAKTGSKTD) are disordered.

Belongs to the GPRASP family. As to quaternary structure, homodimer.

The protein localises to the cytoplasm. It is found in the nucleus. Functionally, survival and differentiation promoting protein that plays a role in the regulation of neurosynaptogenesis. Induces phosphatase PP2A activity which results in APP dephosphorylation and inhibits BACE1-mediated processing of APP. The polypeptide is G protein-coupled receptor associated sorting protein 3 (GPRASP3) (Macaca fascicularis (Crab-eating macaque)).